Reading from the N-terminus, the 155-residue chain is SsrA-binding protein (155 aa).

The span at 132-147 (KRESIKRREQDRDIKR) shows a compositional bias: basic and acidic residues. The interval 132–155 (KRESIKRREQDRDIKRQMKQFNGR) is disordered.

It belongs to the SmpB family.

The protein resides in the cytoplasm. Functionally, required for rescue of stalled ribosomes mediated by trans-translation. Binds to transfer-messenger RNA (tmRNA), required for stable association of tmRNA with ribosomes. tmRNA and SmpB together mimic tRNA shape, replacing the anticodon stem-loop with SmpB. tmRNA is encoded by the ssrA gene; the 2 termini fold to resemble tRNA(Ala) and it encodes a 'tag peptide', a short internal open reading frame. During trans-translation Ala-aminoacylated tmRNA acts like a tRNA, entering the A-site of stalled ribosomes, displacing the stalled mRNA. The ribosome then switches to translate the ORF on the tmRNA; the nascent peptide is terminated with the 'tag peptide' encoded by the tmRNA and targeted for degradation. The ribosome is freed to recommence translation, which seems to be the essential function of trans-translation. The sequence is that of SsrA-binding protein from Streptococcus mutans serotype c (strain ATCC 700610 / UA159).